The primary structure comprises 188 residues: Peptide deformylase (188 aa).

Fe cation is bound by residues Cys-107 and His-149. Glu-150 is an active-site residue. Position 153 (His-153) interacts with Fe cation.

Belongs to the polypeptide deformylase family. Fe(2+) is required as a cofactor.

The catalysed reaction is N-terminal N-formyl-L-methionyl-[peptide] + H2O = N-terminal L-methionyl-[peptide] + formate. Its function is as follows. Removes the formyl group from the N-terminal Met of newly synthesized proteins. Requires at least a dipeptide for an efficient rate of reaction. N-terminal L-methionine is a prerequisite for activity but the enzyme has broad specificity at other positions. The polypeptide is Peptide deformylase (Thermosynechococcus vestitus (strain NIES-2133 / IAM M-273 / BP-1)).